The sequence spans 349 residues: Anthranilate phosphoribosyltransferase (349 aa).

5-phospho-alpha-D-ribose 1-diphosphate is bound by residues Gly82, 85–86, 92–95, 110–118, and Ser122; these read GD, NVSS, and KHGNRAVSG. Gly82 serves as a coordination point for anthranilate. Ser94 is a binding site for Mg(2+). Asn113 lines the anthranilate pocket. Residue Arg168 participates in anthranilate binding. Mg(2+) contacts are provided by Asp227 and Glu228.

It belongs to the anthranilate phosphoribosyltransferase family. In terms of assembly, homodimer. Mg(2+) is required as a cofactor.

It catalyses the reaction N-(5-phospho-beta-D-ribosyl)anthranilate + diphosphate = 5-phospho-alpha-D-ribose 1-diphosphate + anthranilate. It participates in amino-acid biosynthesis; L-tryptophan biosynthesis; L-tryptophan from chorismate: step 2/5. In terms of biological role, catalyzes the transfer of the phosphoribosyl group of 5-phosphorylribose-1-pyrophosphate (PRPP) to anthranilate to yield N-(5'-phosphoribosyl)-anthranilate (PRA). This chain is Anthranilate phosphoribosyltransferase, found in Pseudomonas aeruginosa (strain LESB58).